A 470-amino-acid polypeptide reads, in one-letter code: MTIHQSPEAFGYDAFLRTHQSKEVLRFITCGSVDDGKSTLIGRLLHDTKQIFDDQVTALQRDSRKHGTQGAEVDLALLVDGLQAEREQGITIDVAYRFFSTDRRSFIVADTPGHEQYTRNMATGASTADVAVILVDARHGLTRQTRRHALLVSLLGIHRVALAINKMDLVGWSQDKFDAILSGFQAFAAPLNFSEVRAIPLSAKNGDNVVLPGTAATWYDGVPLLRYLEEVPVKSEERAAAFRMPVQWVNRPNSDFRGFSGLIASGSVAPGDAVTVAPSGKTSTVARIFTADGDLERASEGQSVTLVLADEVDASRGAVIATSDAPLTLTDSLDVRLFWAAETDLAPGASLWAKVGTQTVNAVVKAVHRRIDPETGQAGPADKLAVNDIGDVTLTLDRQIAVDPYVENRDTGSLILIDRETTDTAALGLVQTVVAATKAVTPAPTASESKAQEPARSGGLLAGIKRLFGG.

Residues 22–237 enclose the tr-type G domain; that stretch reads KEVLRFITCG…LEEVPVKSEE (216 aa). The interval 31–38 is G1; sequence GSVDDGKS. 31–38 serves as a coordination point for GTP; sequence GSVDDGKS. The interval 89–93 is G2; sequence GITID. Positions 110–113 are G3; it reads DTPG. GTP contacts are provided by residues 110-114 and 165-168; these read DTPGH and NKMD. Residues 165–168 form a G4 region; the sequence is NKMD. The segment at 202–204 is G5; it reads SAK.

The protein belongs to the TRAFAC class translation factor GTPase superfamily. Classic translation factor GTPase family. CysN/NodQ subfamily. In terms of assembly, heterodimer composed of CysD, the smaller subunit, and CysN.

The catalysed reaction is sulfate + ATP + H(+) = adenosine 5'-phosphosulfate + diphosphate. It participates in sulfur metabolism; hydrogen sulfide biosynthesis; sulfite from sulfate: step 1/3. Functionally, with CysD forms the ATP sulfurylase (ATPS) that catalyzes the adenylation of sulfate producing adenosine 5'-phosphosulfate (APS) and diphosphate, the first enzymatic step in sulfur assimilation pathway. APS synthesis involves the formation of a high-energy phosphoric-sulfuric acid anhydride bond driven by GTP hydrolysis by CysN coupled to ATP hydrolysis by CysD. The protein is Sulfate adenylyltransferase subunit 1 of Methylorubrum populi (strain ATCC BAA-705 / NCIMB 13946 / BJ001) (Methylobacterium populi).